The following is a 759-amino-acid chain: LPS-assembly protein LptD (759 aa).

The signal sequence occupies residues 1–45 (MKPLKLELNPRDFNHYQAAFLPYRMKIKQPLHVLCFSVCSLSAVA).

It belongs to the LptD family. In terms of assembly, component of the lipopolysaccharide transport and assembly complex. Interacts with LptE and LptA.

Its subcellular location is the cell outer membrane. Together with LptE, is involved in the assembly of lipopolysaccharide (LPS) at the surface of the outer membrane. The protein is LPS-assembly protein LptD of Pseudoalteromonas atlantica (strain T6c / ATCC BAA-1087).